We begin with the raw amino-acid sequence, 1022 residues long: Polyamine-modulated factor 1-binding protein 1 (1022 aa).

Coiled-coil stretches lie at residues 89–121, 169–281, 312–377, 411–732, and 758–968; these read NKQY…LQAS, EKLH…ACSN, SEDC…LREE, LKKD…SAIQ, and QDDL…KAGN. 2 stretches are compositionally biased toward basic and acidic residues: residues 545 to 556 and 571 to 582; these read QKESSKIEEERK and EGQRRLSNAEKE. Positions 545 to 582 are disordered; it reads QKESSKIEEERKHNRQRLQELSSELSEGQRRLSNAEKE.

As to expression, expressed in the testis.

Its subcellular location is the cell projection. The protein localises to the cilium. It localises to the flagellum. Its function is as follows. Required for normal spermatogenesis. It functions as a scaffold protein that attaches the sperm head-tail connecting piece to the nuclear envelope, thus maintaining sperm head and tail integrity. May also be involved in the general organization of cellular cytoskeleton. This is Polyamine-modulated factor 1-binding protein 1 (Pmfbp1) from Mus musculus (Mouse).